We begin with the raw amino-acid sequence, 709 residues long: Polyribonucleotide nucleotidyltransferase (709 aa).

2 residues coordinate Mg(2+): D487 and D493. Residues 554–613 (PRIHTMKISSDKIKDVIGKGGAVIRALCEETGTTIEIEDDGTIKIAATEGAAAKEAIRRI) enclose the KH domain. Residues 623–691 (GKIYTGKVMR…RQGRIRLSIK (69 aa)) enclose the S1 motif domain.

It belongs to the polyribonucleotide nucleotidyltransferase family. In terms of assembly, component of the RNA degradosome, which is a multiprotein complex involved in RNA processing and mRNA degradation. Mg(2+) is required as a cofactor.

The protein resides in the cytoplasm. The enzyme catalyses RNA(n+1) + phosphate = RNA(n) + a ribonucleoside 5'-diphosphate. In terms of biological role, involved in mRNA degradation. Catalyzes the phosphorolysis of single-stranded polyribonucleotides processively in the 3'- to 5'-direction. This is Polyribonucleotide nucleotidyltransferase from Aliivibrio fischeri (strain ATCC 700601 / ES114) (Vibrio fischeri).